We begin with the raw amino-acid sequence, 522 residues long: Light-independent protochlorophyllide reductase subunit B (522 aa).

D36 contributes to the [4Fe-4S] cluster binding site. Catalysis depends on D290, which acts as the Proton donor. Position 425 to 426 (425 to 426 (GL)) interacts with substrate.

Belongs to the ChlB/BchB/BchZ family. In terms of assembly, protochlorophyllide reductase is composed of three subunits; ChlL, ChlN and ChlB. Forms a heterotetramer of two ChlB and two ChlN subunits. [4Fe-4S] cluster is required as a cofactor.

The catalysed reaction is chlorophyllide a + oxidized 2[4Fe-4S]-[ferredoxin] + 2 ADP + 2 phosphate = protochlorophyllide a + reduced 2[4Fe-4S]-[ferredoxin] + 2 ATP + 2 H2O. It participates in porphyrin-containing compound metabolism; chlorophyll biosynthesis (light-independent). Component of the dark-operative protochlorophyllide reductase (DPOR) that uses Mg-ATP and reduced ferredoxin to reduce ring D of protochlorophyllide (Pchlide) to form chlorophyllide a (Chlide). This reaction is light-independent. The NB-protein (ChlN-ChlB) is the catalytic component of the complex. This chain is Light-independent protochlorophyllide reductase subunit B, found in Synechococcus sp. (strain CC9311).